The sequence spans 441 residues: ATP-dependent protease ATPase subunit HslU (441 aa).

ATP contacts are provided by residues I18, 60 to 65, D254, E319, and R391; that span reads GVGKTE.

It belongs to the ClpX chaperone family. HslU subfamily. As to quaternary structure, a double ring-shaped homohexamer of HslV is capped on each side by a ring-shaped HslU homohexamer. The assembly of the HslU/HslV complex is dependent on binding of ATP.

It localises to the cytoplasm. ATPase subunit of a proteasome-like degradation complex; this subunit has chaperone activity. The binding of ATP and its subsequent hydrolysis by HslU are essential for unfolding of protein substrates subsequently hydrolyzed by HslV. HslU recognizes the N-terminal part of its protein substrates and unfolds these before they are guided to HslV for hydrolysis. This chain is ATP-dependent protease ATPase subunit HslU, found in Shewanella pealeana (strain ATCC 700345 / ANG-SQ1).